The following is a 403-amino-acid chain: Phosphopentomutase (403 aa).

Positions 13, 298, 303, 339, 340, and 351 each coordinate Mn(2+).

This sequence belongs to the phosphopentomutase family. Mn(2+) serves as cofactor.

It is found in the cytoplasm. It carries out the reaction 2-deoxy-alpha-D-ribose 1-phosphate = 2-deoxy-D-ribose 5-phosphate. It catalyses the reaction alpha-D-ribose 1-phosphate = D-ribose 5-phosphate. Its pathway is carbohydrate degradation; 2-deoxy-D-ribose 1-phosphate degradation; D-glyceraldehyde 3-phosphate and acetaldehyde from 2-deoxy-alpha-D-ribose 1-phosphate: step 1/2. In terms of biological role, isomerase that catalyzes the conversion of deoxy-ribose 1-phosphate (dRib-1-P) and ribose 1-phosphate (Rib-1-P) to deoxy-ribose 5-phosphate (dRib-5-P) and ribose 5-phosphate (Rib-5-P), respectively. The sequence is that of Phosphopentomutase from Streptococcus pyogenes serotype M5 (strain Manfredo).